The sequence spans 305 residues: UDP-N-acetylenolpyruvoylglucosamine reductase (305 aa).

Residues 34-199 (RVGGPAQVLF…TSARFRGEVK (166 aa)) enclose the FAD-binding PCMH-type domain. Arginine 179 is a catalytic residue. The active-site Proton donor is the serine 228. Glutamate 298 is a catalytic residue.

It belongs to the MurB family. It depends on FAD as a cofactor.

It is found in the cytoplasm. It carries out the reaction UDP-N-acetyl-alpha-D-muramate + NADP(+) = UDP-N-acetyl-3-O-(1-carboxyvinyl)-alpha-D-glucosamine + NADPH + H(+). The protein operates within cell wall biogenesis; peptidoglycan biosynthesis. In terms of biological role, cell wall formation. This Bradyrhizobium diazoefficiens (strain JCM 10833 / BCRC 13528 / IAM 13628 / NBRC 14792 / USDA 110) protein is UDP-N-acetylenolpyruvoylglucosamine reductase.